We begin with the raw amino-acid sequence, 207 residues long: ATP-dependent Clp protease proteolytic subunit (207 aa).

The propeptide occupies 1–14; the sequence is MSYSGERDNLAPHM. The active-site Nucleophile is S111. H136 is an active-site residue.

Belongs to the peptidase S14 family. In terms of assembly, fourteen ClpP subunits assemble into 2 heptameric rings which stack back to back to give a disk-like structure with a central cavity, resembling the structure of eukaryotic proteasomes. Component of the ClpAP and ClpXP complexes.

It localises to the cytoplasm. The catalysed reaction is Hydrolysis of proteins to small peptides in the presence of ATP and magnesium. alpha-casein is the usual test substrate. In the absence of ATP, only oligopeptides shorter than five residues are hydrolyzed (such as succinyl-Leu-Tyr-|-NHMec, and Leu-Tyr-Leu-|-Tyr-Trp, in which cleavage of the -Tyr-|-Leu- and -Tyr-|-Trp bonds also occurs).. Functionally, cleaves peptides in various proteins in a process that requires ATP hydrolysis. Has a chymotrypsin-like activity. Plays a major role in the degradation of misfolded proteins. The polypeptide is ATP-dependent Clp protease proteolytic subunit (Salmonella paratyphi A (strain ATCC 9150 / SARB42)).